We begin with the raw amino-acid sequence, 172 residues long: MTLDLHDYVASIQDFPEKGVTFRDISPLMENGEAYRQATNAIIKFARDKGVEMIVGPEARGFIVGCPVAYEMGIGFAPARKKGKLPRETVKATYGLEYGKSELYLQKDAIKPGQKVLITDDLLATGGTIAATIELVEKLGGIVVGTAFFIELKDLNGREKIKDYDTLSLMEY.

This sequence belongs to the purine/pyrimidine phosphoribosyltransferase family. Homodimer.

It is found in the cytoplasm. The enzyme catalyses AMP + diphosphate = 5-phospho-alpha-D-ribose 1-diphosphate + adenine. Its pathway is purine metabolism; AMP biosynthesis via salvage pathway; AMP from adenine: step 1/1. Functionally, catalyzes a salvage reaction resulting in the formation of AMP, that is energically less costly than de novo synthesis. The protein is Adenine phosphoribosyltransferase of Pediococcus pentosaceus (strain ATCC 25745 / CCUG 21536 / LMG 10740 / 183-1w).